A 380-amino-acid polypeptide reads, in one-letter code: MVGFGANRRAGRLPSLVLAVLLVVIAVLAFNYWSISSRHVLLQEEVAELQGQVQRTEVARGRLEKRNSDLLLLVDSHKKQIDQKEADYGRLSSRLQAREGLGKRCEDDKVKLQNNISYQMADIHHLKEQLAELRQEFLRQEDQLQDYRKNNTYLVKRLEYESFQCGQQIKELRAQHEENIKKLADQFLQEQKQEAHKFESKGGNELDTDNHAVPKNIPEVAENGAGKNEEPSSHHIPHGKEQIKRGGDAGMPGIEENDLAKAEDVPVALKKPPVSFSQYESHQVISHLPTGQPLSPNMVPDSHINHNGNSRTSKQNPSNPLQRLIPGPNLENEPRIQAEVLKQATKDRAGDFHKLKQNDEERELQMDPADYGKQRFNDAL.

An N-acetylmethionine modification is found at Met-1. Topologically, residues 1–14 are cytoplasmic; it reads MVGFGANRRAGRLP. Residues 15 to 35 form a helical; Signal-anchor for type II membrane protein membrane-spanning segment; that stretch reads SLVLAVLLVVIAVLAFNYWSI. Positions 35-195 form a coiled coil; that stretch reads ISSRHVLLQE…QFLQEQKQEA (161 aa). The Lumenal segment spans residues 36–380; sequence SSRHVLLQEE…YGKQRFNDAL (345 aa). Composition is skewed to basic and acidic residues over residues 192-212 and 227-247; these read KQEA…DNHA and KNEE…KRGG. Positions 192-254 are disordered; that stretch reads KQEAHKFESK…RGGDAGMPGI (63 aa). Residues Ser-233 and Ser-275 each carry the phosphoserine modification. The segment at 280 to 380 is disordered; it reads ESHQVISHLP…YGKQRFNDAL (101 aa). The segment covering 305–321 has biased composition (polar residues); sequence NHNGNSRTSKQNPSNPL. Residues 344–380 show a composition bias toward basic and acidic residues; it reads ATKDRAGDFHKLKQNDEERELQMDPADYGKQRFNDAL.

This sequence belongs to the GOLM family.

The protein localises to the membrane. The sequence is that of Protein GOLM2 (GOLM2) from Bos taurus (Bovine).